The following is a 660-amino-acid chain: F-box/LRR-repeat protein 5 (660 aa).

The segment at 1-157 is hemerythrin-like; sequence MAPFPDEVDL…IKKKVIAQHC (157 aa). Fe(3+) contacts are provided by His-15, His-57, Glu-58, Glu-61, His-80, His-124, and Glu-127. Residues 200–246 enclose the F-box domain; the sequence is SASICNLPPEVMLNIFSYLNPQDLCRCSQVNTKWAQLARTGSLWRHL. The interval 283-305 is disordered; it reads YQEWDEDADIDESEETGEDDPSI. The segment covering 285–303 has biased composition (acidic residues); sequence EWDEDADIDESEETGEDDP. LRR repeat units follow at residues 311–337, 338–362, 363–389, 390–417, 551–576, 577–604, 605–630, and 631–649; these read EKELLNSLVHYILPYIGHSVKTLVLAY, SSATSNKVIRQILEYCPNMEHLDLT, QTDISDSAFNGWCFGACQTLRHIDLSG, CEKITDSALEKLSVALGMPLAHKKRLLK, IRDICPGSAKLDQQVARVLQFLSLSG, CHQITDHGLRVLTIGGGLPNLEHLNLSG, CLNVTGSGLQDLVSACPSLNDEHFYY, and CDNISGPHAATASGCQNLQ. The [2Fe-2S] cluster site is built by Cys-631, Cys-645, Cys-655, and Cys-656.

Part of a SCF (SKP1-cullin-F-box) protein ligase complex. [2Fe-2S] cluster is required as a cofactor. Ubiquitinated upon iron and oxygen depletion, leading to its degradation by the proteasome. Ubiquitination is regulated by the hemerythrin-like region that acts as an oxygen and iron sensor.

Its subcellular location is the cytoplasm. It localises to the perinuclear region. The protein resides in the nucleus. It functions in the pathway protein modification; protein ubiquitination. Functionally, component of some SCF (SKP1-cullin-F-box) protein ligase complex that plays a central role in iron homeostasis by promoting the ubiquitination and subsequent degradation of ireb2/irp2. Upon high iron and oxygen level, it specifically recognizes and binds ireb2/irp2, promoting its ubiquitination and degradation by the proteasome. The sequence is that of F-box/LRR-repeat protein 5 (fbxl5) from Xenopus tropicalis (Western clawed frog).